A 76-amino-acid polypeptide reads, in one-letter code: Protein OPG146 (76 aa).

The protein belongs to the orthopoxvirus OPG146 family. As to quaternary structure, interacts with capping enzyme RAP94/OPG109, the two large RNA polymerase subunits RPO147/OPG105 and RPO132/OPG151, the two early transcription factor subunits OPG185 and OPG133, one of the capping enzyme subunits OPG113, the nucleoside triphosphate phosphohydrolase OPG123, two core proteins OPG129 and OPG138, and a virion protein OPG064.

The protein localises to the virion. Its subcellular location is the host cytoplasm. It is found in the host nucleus. Functionally, plays a role in the maturation of immature virions to infectious particles. May also participate in viral transcription. The chain is Protein OPG146 (OPG146) from Variola virus (isolate Human/India/Ind3/1967) (VARV).